Here is a 129-residue protein sequence, read N- to C-terminus: MSNVPAELKYSKEHEWLRKEADGTYTVGITEHAQELLGDMVFVDLPEVGATVSAGDDCAVAESVKAASDIYAPVSGEIVAVNDALSDSPELVNSEPYAGGWIFKIKASDESELESLLDATAYETLLEDE.

Positions 24-106 constitute a Lipoyl-binding domain; it reads TYTVGITEHA…YAGGWIFKIK (83 aa). K65 is subject to N6-lipoyllysine.

This sequence belongs to the GcvH family. In terms of assembly, the glycine cleavage system is composed of four proteins: P, T, L and H. (R)-lipoate serves as cofactor.

In terms of biological role, the glycine cleavage system catalyzes the degradation of glycine. The H protein shuttles the methylamine group of glycine from the P protein to the T protein. The protein is Glycine cleavage system H protein of Escherichia coli O139:H28 (strain E24377A / ETEC).